The sequence spans 355 residues: UDP-N-acetylglucosamine--N-acetylmuramyl-(pentapeptide) pyrophosphoryl-undecaprenol N-acetylglucosamine transferase (355 aa).

UDP-N-acetyl-alpha-D-glucosamine-binding positions include 11 to 13, Arg-164, Ser-194, and Gln-289; that span reads TAG.

The protein belongs to the glycosyltransferase 28 family. MurG subfamily.

Its subcellular location is the cell membrane. It catalyses the reaction di-trans,octa-cis-undecaprenyl diphospho-N-acetyl-alpha-D-muramoyl-L-alanyl-D-glutamyl-meso-2,6-diaminopimeloyl-D-alanyl-D-alanine + UDP-N-acetyl-alpha-D-glucosamine = di-trans,octa-cis-undecaprenyl diphospho-[N-acetyl-alpha-D-glucosaminyl-(1-&gt;4)]-N-acetyl-alpha-D-muramoyl-L-alanyl-D-glutamyl-meso-2,6-diaminopimeloyl-D-alanyl-D-alanine + UDP + H(+). It participates in cell wall biogenesis; peptidoglycan biosynthesis. Cell wall formation. Catalyzes the transfer of a GlcNAc subunit on undecaprenyl-pyrophosphoryl-MurNAc-pentapeptide (lipid intermediate I) to form undecaprenyl-pyrophosphoryl-MurNAc-(pentapeptide)GlcNAc (lipid intermediate II). The protein is UDP-N-acetylglucosamine--N-acetylmuramyl-(pentapeptide) pyrophosphoryl-undecaprenol N-acetylglucosamine transferase of Lachnoclostridium phytofermentans (strain ATCC 700394 / DSM 18823 / ISDg) (Clostridium phytofermentans).